Reading from the N-terminus, the 439-residue chain is MDHLAHHYHAHIAELNRRVAEIVSREALSGLVIHSGQPHRMFLDDINYPFKANPHFKAWLPVLDNPNCWLVVNGRDKPQLIFYHPVDFWHKVSDVPEMFWTEHFEIKLLTKADKVAELLPSDITNWAYLGEHLDVAEVLGFTSRNPDSVMSYLHFHRTTKTEYELECMRRANQIAVQGHLAAKNAFYNGASEFEIQQQYLSAVGQGENEVPYGNIIALNQNAAILHYTALEHQNPARRLSFLIDAGASYFGYASDITRTYAFEKNRFDELITAMNKAQLELIDMMRPGVRYPDLHLATHGKVAQMLLDFELATGDAQGLVDQGITSAFFPHGLGHMLGLQVHDVGGFAFDERGTHIPAPEAHPFLRCTRILAPNQVLTMEPGLYIIDTLLNELKQDSRDQQINWRTVDELRPFGGIRIEDNVIVHQDRNENMTRELGLA.

Residues Asp244, Asp255, His335, Glu380, and Glu419 each contribute to the Mn(2+) site.

Belongs to the peptidase M24B family. Bacterial-type prolidase subfamily. Mn(2+) is required as a cofactor.

It carries out the reaction Xaa-L-Pro dipeptide + H2O = an L-alpha-amino acid + L-proline. In terms of biological role, splits dipeptides with a prolyl residue in the C-terminal position. The chain is Xaa-Pro dipeptidase from Shewanella sp. (strain MR-4).